The following is a 303-amino-acid chain: Diaminopimelate epimerase (303 aa).

Position 14 (N14) interacts with substrate. A compositionally biased stretch (low complexity) spans P60–R74. The tract at residues P60–P86 is disordered. Pro residues predominate over residues P75–P86. A substrate-binding site is contributed by N97. C106 functions as the Proton donor in the catalytic mechanism. Residues G107–N108, N178, N209, and E227–R228 each bind substrate. The Proton acceptor role is filled by C236. A substrate-binding site is contributed by G237–S238.

This sequence belongs to the diaminopimelate epimerase family. Homodimer.

It localises to the cytoplasm. The enzyme catalyses (2S,6S)-2,6-diaminopimelate = meso-2,6-diaminopimelate. The protein operates within amino-acid biosynthesis; L-lysine biosynthesis via DAP pathway; DL-2,6-diaminopimelate from LL-2,6-diaminopimelate: step 1/1. Catalyzes the stereoinversion of LL-2,6-diaminopimelate (L,L-DAP) to meso-diaminopimelate (meso-DAP), a precursor of L-lysine and an essential component of the bacterial peptidoglycan. This chain is Diaminopimelate epimerase, found in Acidothermus cellulolyticus (strain ATCC 43068 / DSM 8971 / 11B).